A 160-amino-acid polypeptide reads, in one-letter code: Small ribosomal subunit protein uS10m (160 aa).

This sequence belongs to the universal ribosomal protein uS10 family. Component of the mitochondrial ribosome small subunit (28S) which comprises a 12S rRNA and about 30 distinct proteins.

The protein localises to the mitochondrion. This chain is Small ribosomal subunit protein uS10m (Mrps10), found in Mus musculus (Mouse).